The chain runs to 102 residues: MNKAILHTIIVYTLASCPYCIKAKALLDEKNVAYEEIEVSNFTQEEKEKFIKKSGGKKTVPQIFIDNMHVGGCDALFDLEKEGRLDKLLENQPKTTSPAAGA.

In terms of domain architecture, Glutaredoxin spans 1-96 (MNKAILHTII…KLLENQPKTT (96 aa)). A disulfide bridge links Cys-17 with Cys-20.

Belongs to the glutaredoxin family. As to quaternary structure, monomer.

It localises to the cytoplasm. Functionally, has a glutathione-disulfide oxidoreductase activity in the presence of NADPH and glutathione reductase. Reduces low molecular weight disulfides and proteins. This Rickettsia conorii (strain ATCC VR-613 / Malish 7) protein is Glutaredoxin 1 (grxC1).